A 370-amino-acid chain; its full sequence is uncharacterized protein (370 aa).

The region spanning 62–293 (ATVALVGFPS…LKERMWRALG (232 aa)) is the OBG-type G domain. GTP is bound by residues 68-75 (GFPSVGKS), 114-118 (DVPGL), and 243-246 (NKVD). The TGS domain maps to 293–368 (GLIRIYMDKP…EDEDVLRVVA (76 aa)).

It belongs to the TRAFAC class OBG-HflX-like GTPase superfamily. OBG GTPase family.

This is an uncharacterized protein from Halobacterium salinarum (strain ATCC 700922 / JCM 11081 / NRC-1) (Halobacterium halobium).